An 82-amino-acid chain; its full sequence is DinI-like protein (82 aa).

It belongs to the DinI family.

This Enterobacteria phage VT1-Sakai protein is DinI-like protein.